A 263-amino-acid chain; its full sequence is Triosephosphate isomerase (263 aa).

10–12 contacts substrate; the sequence is NWK. The Electrophile role is filled by H104. The Proton acceptor role is filled by E176. Substrate-binding positions include G182, S221, and 242–243; that span reads GG.

It belongs to the triosephosphate isomerase family. In terms of assembly, homodimer.

It localises to the cytoplasm. It catalyses the reaction D-glyceraldehyde 3-phosphate = dihydroxyacetone phosphate. It participates in carbohydrate biosynthesis; gluconeogenesis. It functions in the pathway carbohydrate degradation; glycolysis; D-glyceraldehyde 3-phosphate from glycerone phosphate: step 1/1. Its function is as follows. Involved in the gluconeogenesis. Catalyzes stereospecifically the conversion of dihydroxyacetone phosphate (DHAP) to D-glyceraldehyde-3-phosphate (G3P). This chain is Triosephosphate isomerase, found in Haemophilus influenzae (strain ATCC 51907 / DSM 11121 / KW20 / Rd).